A 167-amino-acid polypeptide reads, in one-letter code: Probable glutathione peroxidase 8 (167 aa).

The active site involves Cys-41.

The protein belongs to the glutathione peroxidase family.

It catalyses the reaction 2 glutathione + H2O2 = glutathione disulfide + 2 H2O. May constitute a glutathione peroxidase-like protective system against oxidative stresses. The chain is Probable glutathione peroxidase 8 (GPX8) from Arabidopsis thaliana (Mouse-ear cress).